The primary structure comprises 238 residues: Bacterial microcompartment shell protein PduB (238 aa).

BMC circularly permuted domains lie at 14–125 (FVGA…VYNA) and 126–225 (KAGH…LSQF). Cysteine 158 and cysteine 197 are oxidised to a cystine.

It belongs to the EutL/PduB family. In terms of assembly, homotrimerizes to form a pseudohexamer with a central pore 7.5 Angstroms wide and 22 Angstroms long; the pore channel in the crystal binds up to 4 glycerol molecules. A disulfide bond forms in the pore, it is not clear if this is an artifact. The trimers pack into an array.

Its subcellular location is the bacterial microcompartment. The protein operates within polyol metabolism; 1,2-propanediol degradation. One of the major shell proteins of the bacterial microcompartment (BMC) dedicated to 1,2-propanediol (1,2-PD) degradation. Probably involved in a propanediol fermentation/reuterin formation pathway. The chain is Bacterial microcompartment shell protein PduB from Limosilactobacillus reuteri (strain DSM 20016) (Lactobacillus reuteri).